The following is a 556-amino-acid chain: Dihydroxy-acid dehydratase (556 aa).

Residue Cys-47 coordinates [2Fe-2S] cluster. Asp-79 serves as a coordination point for Mg(2+). Cys-120 provides a ligand contact to [2Fe-2S] cluster. 2 residues coordinate Mg(2+): Asp-121 and Lys-122. Residue Lys-122 is modified to N6-carboxylysine. Residue Cys-192 participates in [2Fe-2S] cluster binding. Mg(2+) is bound at residue Glu-444. Catalysis depends on Ser-470, which acts as the Proton acceptor.

This sequence belongs to the IlvD/Edd family. In terms of assembly, homodimer. It depends on [2Fe-2S] cluster as a cofactor. Mg(2+) is required as a cofactor.

The enzyme catalyses (2R)-2,3-dihydroxy-3-methylbutanoate = 3-methyl-2-oxobutanoate + H2O. It catalyses the reaction (2R,3R)-2,3-dihydroxy-3-methylpentanoate = (S)-3-methyl-2-oxopentanoate + H2O. It participates in amino-acid biosynthesis; L-isoleucine biosynthesis; L-isoleucine from 2-oxobutanoate: step 3/4. Its pathway is amino-acid biosynthesis; L-valine biosynthesis; L-valine from pyruvate: step 3/4. Its function is as follows. Functions in the biosynthesis of branched-chain amino acids. Catalyzes the dehydration of (2R,3R)-2,3-dihydroxy-3-methylpentanoate (2,3-dihydroxy-3-methylvalerate) into 2-oxo-3-methylpentanoate (2-oxo-3-methylvalerate) and of (2R)-2,3-dihydroxy-3-methylbutanoate (2,3-dihydroxyisovalerate) into 2-oxo-3-methylbutanoate (2-oxoisovalerate), the penultimate precursor to L-isoleucine and L-valine, respectively. This is Dihydroxy-acid dehydratase from Prochlorococcus marinus (strain MIT 9303).